A 1174-amino-acid chain; its full sequence is Pesticidal crystal protein Cry1Fa (1174 aa).

The protein belongs to the delta endotoxin family.

Promotes colloidosmotic lysis by binding to the midgut epithelial cells of many lepidopteran larvae. The polypeptide is Pesticidal crystal protein Cry1Fa (cry1Fa) (Bacillus thuringiensis subsp. aizawai).